The primary structure comprises 68 residues: Medusin-AS (68 aa).

A signal peptide spans 1-22; sequence MAFLKKSLFLVLFLGLVSLSVC. The propeptide occupies 23-49; sequence EEEKRESEEEKNEQEEDDRDERSEEKR. The segment at 24-46 is disordered; that stretch reads EEKRESEEEKNEQEEDDRDERSE. The segment covering 31–41 has biased composition (acidic residues); the sequence is EEKNEQEEDDR. Position 67 is a leucine amide (leucine 67).

This sequence belongs to the frog skin active peptide (FSAP) family. Medusin subfamily. As to expression, expressed by the skin glands.

The protein resides in the secreted. Functionally, antimicrobial peptide active against Gram-positive bacteria and fungi but inactive against Gram-negative bacteria. Also inhibits growth of B.dendrobatidis zoospores at high concentrations. Shows anticancer activities. Shows hemolytic activity. This Agalychnis spurrelli (Gliding leaf frog) protein is Medusin-AS.